The primary structure comprises 141 residues: Large ribosomal subunit protein uL16 (141 aa).

Residues 1–20 (MLMPKRTKYRKQMKGRNRGK) form a disordered region.

Belongs to the universal ribosomal protein uL16 family. In terms of assembly, part of the 50S ribosomal subunit.

Functionally, binds 23S rRNA and is also seen to make contacts with the A and possibly P site tRNAs. This Helicobacter hepaticus (strain ATCC 51449 / 3B1) protein is Large ribosomal subunit protein uL16.